A 134-amino-acid polypeptide reads, in one-letter code: DNA-directed RNA polymerase subunit omega (134 aa).

This sequence belongs to the RNA polymerase subunit omega family. In terms of assembly, the RNAP catalytic core consists of 2 alpha, 1 beta, 1 beta' and 1 omega subunit. When a sigma factor is associated with the core the holoenzyme is formed, which can initiate transcription.

It catalyses the reaction RNA(n) + a ribonucleoside 5'-triphosphate = RNA(n+1) + diphosphate. Functionally, promotes RNA polymerase assembly. Latches the N- and C-terminal regions of the beta' subunit thereby facilitating its interaction with the beta and alpha subunits. The sequence is that of DNA-directed RNA polymerase subunit omega from Brucella anthropi (strain ATCC 49188 / DSM 6882 / CCUG 24695 / JCM 21032 / LMG 3331 / NBRC 15819 / NCTC 12168 / Alc 37) (Ochrobactrum anthropi).